A 223-amino-acid chain; its full sequence is Probable glutathione S-transferase (223 aa).

Residues 2–81 (AEVKLLGFWY…YIDETFEGPS (80 aa)) enclose the GST N-terminal domain. Glutathione is bound by residues S12, K39, V53, and 65–66 (ES). The region spanning 86 to 212 (DPYDRALARF…ELLAFFRARF (127 aa)) is the GST C-terminal domain.

It belongs to the GST superfamily. HSP26 family. Root tip-specific expression.

It catalyses the reaction RX + glutathione = an S-substituted glutathione + a halide anion + H(+). In Nicotiana tabacum (Common tobacco), this protein is Probable glutathione S-transferase.